The chain runs to 193 residues: MAGAHVKYRHLSRSSAHRQALLRNLVTSLIKNETIHTTYPKAKEAQRLAEKLITLSKRDTETARRSAQGILYTPDQLLPKLFGEIRERYANRPGGYTRVLRTEPKDQYSQAPSAILELVDGPKDMRFAMTAATVARDREQKTESTDLTKKNMDKVTRFRKDGMRAFEDMVASLRDMKFTAGAINPKEWKKLDR.

It belongs to the bacterial ribosomal protein bL17 family. In terms of assembly, component of the mitochondrial large ribosomal subunit (mt-LSU). Mature N.crassa 74S mitochondrial ribosomes consist of a small (37S) and a large (54S) subunit. The 37S small subunit contains a 16S ribosomal RNA (16S mt-rRNA) and 32 different proteins. The 54S large subunit contains a 23S rRNA (23S mt-rRNA) and 42 different proteins.

It localises to the mitochondrion. Functionally, component of the mitochondrial ribosome (mitoribosome), a dedicated translation machinery responsible for the synthesis of mitochondrial genome-encoded proteins, including at least some of the essential transmembrane subunits of the mitochondrial respiratory chain. The mitoribosomes are attached to the mitochondrial inner membrane and translation products are cotranslationally integrated into the membrane. This Neurospora crassa (strain ATCC 24698 / 74-OR23-1A / CBS 708.71 / DSM 1257 / FGSC 987) protein is Large ribosomal subunit protein bL17m (mrpl8).